The sequence spans 157 residues: Ribonuclease H (157 aa).

Residues 1 to 146 (MPDLVAYTDG…ADELARAGMA (146 aa)) form the RNase H type-1 domain. Mg(2+) contacts are provided by D9, E52, D74, and D138.

This sequence belongs to the RNase H family. As to quaternary structure, monomer. It depends on Mg(2+) as a cofactor.

The protein localises to the cytoplasm. It catalyses the reaction Endonucleolytic cleavage to 5'-phosphomonoester.. Functionally, endonuclease that specifically degrades the RNA of RNA-DNA hybrids. The sequence is that of Ribonuclease H from Jannaschia sp. (strain CCS1).